We begin with the raw amino-acid sequence, 394 residues long: MPDKFKRVHVVVMDSVGIGEAPDAAKFGDFDVDTFGHIAKHVGGLKMPEMGKLGLSNIREIEGIKKAEKPLAYYTKMQEASNGKDTMTGHWEIMGLYIDTPFRVFPDGFPDDLINQIEEKTGRKVIGNKPASGTEIMAELGEEHVKTGALIVYTSADSVLQIAAHEDVVPLEELYEICEFCRKITLDDPYMLGRIIARPFVGEPGAFVRTPNRHDYALKPFKPTVMDALKDGGKDVIAIGKISDIFDGEGVTESIRTKSNMDGMDQFIAVLDKDFNGMSFLNLVDFDALFGHRRDPQGYADALVDFDGRLVEVMEKLTDDDLLIITADHGNDPTYTGTDHTREFVPLLVYSPRFKNGGSELELRKTFADLGATVADNFDVKMPEYGTSFLRDLK.

Positions 14, 287, 292, 328, 329, and 340 each coordinate Mn(2+).

It belongs to the phosphopentomutase family. It depends on Mn(2+) as a cofactor.

It is found in the cytoplasm. The catalysed reaction is 2-deoxy-alpha-D-ribose 1-phosphate = 2-deoxy-D-ribose 5-phosphate. It carries out the reaction alpha-D-ribose 1-phosphate = D-ribose 5-phosphate. It participates in carbohydrate degradation; 2-deoxy-D-ribose 1-phosphate degradation; D-glyceraldehyde 3-phosphate and acetaldehyde from 2-deoxy-alpha-D-ribose 1-phosphate: step 1/2. Functionally, isomerase that catalyzes the conversion of deoxy-ribose 1-phosphate (dRib-1-P) and ribose 1-phosphate (Rib-1-P) to deoxy-ribose 5-phosphate (dRib-5-P) and ribose 5-phosphate (Rib-5-P), respectively. This Listeria monocytogenes serovar 1/2a (strain ATCC BAA-679 / EGD-e) protein is Phosphopentomutase.